The following is a 268-amino-acid chain: Ribosomal RNA small subunit methyltransferase A (268 aa).

Positions 23, 25, 50, 72, 97, and 116 each coordinate S-adenosyl-L-methionine.

The protein belongs to the class I-like SAM-binding methyltransferase superfamily. rRNA adenine N(6)-methyltransferase family. RsmA subfamily.

The protein resides in the cytoplasm. The enzyme catalyses adenosine(1518)/adenosine(1519) in 16S rRNA + 4 S-adenosyl-L-methionine = N(6)-dimethyladenosine(1518)/N(6)-dimethyladenosine(1519) in 16S rRNA + 4 S-adenosyl-L-homocysteine + 4 H(+). Its function is as follows. Specifically dimethylates two adjacent adenosines (A1518 and A1519) in the loop of a conserved hairpin near the 3'-end of 16S rRNA in the 30S particle. May play a critical role in biogenesis of 30S subunits. This chain is Ribosomal RNA small subunit methyltransferase A, found in Rickettsia bellii (strain RML369-C).